A 375-amino-acid chain; its full sequence is MQCALYDAGRCRSCQWITQPIPEQLSAKTADLKNLLADFPVEEWCAPVSGPEQGFRNKAKMVVSGSVEKPLLGMLHRDGTPEDLCDCPLYPASFAPVFAALKPFIARAGLTPYNVARKRGELKYILLTESQSDGGMMLRFVLRSETKLAQLRKALPWLQEQLPQLKVITVNIQPVHMAIMEGETEIYLTEQQALAERFNDVPLWVRPQSFFQTNPAVASQLYATARDWVRQLPVKHMWDLFCGVGGFGLHCATPDMQLTGIEIAPEAIACAKQSAAELGLTRLQFQALDSTQFATAQGEVPELVLVNPPRRGIGKPLCDYLSTMAPRFIIYSSCNAQTMAKDVRELPGYRIERVQLFDMFPHTAHYEVLTLLVKQ.

[4Fe-4S] cluster is bound by residues Cys-3, Cys-11, Cys-14, and Cys-87. 4 residues coordinate S-adenosyl-L-methionine: Gln-212, Phe-241, Glu-262, and Asn-307. Cys-334 functions as the Nucleophile in the catalytic mechanism.

It belongs to the class I-like SAM-binding methyltransferase superfamily. RNA M5U methyltransferase family. RlmC subfamily.

It carries out the reaction uridine(747) in 23S rRNA + S-adenosyl-L-methionine = 5-methyluridine(747) in 23S rRNA + S-adenosyl-L-homocysteine + H(+). Its function is as follows. Catalyzes the formation of 5-methyl-uridine at position 747 (m5U747) in 23S rRNA. This chain is 23S rRNA (uracil(747)-C(5))-methyltransferase RlmC, found in Escherichia coli O9:H4 (strain HS).